A 150-amino-acid chain; its full sequence is Actin-depolymerizing factor 3 (150 aa).

An ADF-H domain is found at 7 to 150 (GVAVSEECKA…TLDVLKDHTS (144 aa)).

Belongs to the actin-binding proteins ADF family.

Actin-depolymerizing protein. Severs actin filaments (F-actin) and binds to actin monomers. This is Actin-depolymerizing factor 3 (ADF3) from Oryza sativa subsp. japonica (Rice).